A 161-amino-acid polypeptide reads, in one-letter code: M-phase phosphoprotein 6 (161 aa).

Glycyl lysine isopeptide (Lys-Gly) (interchain with G-Cter in SUMO2) cross-links involve residues lysine 37 and lysine 86. At serine 111 the chain carries Phosphoserine. A Nuclear localization signal motif is present at residues 117 to 134; sequence RRYETLVGTIGKKFVKKR. Residues lysine 128, lysine 151, and lysine 154 each participate in a glycyl lysine isopeptide (Lys-Gly) (interchain with G-Cter in SUMO2) cross-link.

The protein belongs to the MPP6 family. In terms of assembly, associates with the RNA exosome complex, mediated by EXOSC3. Interacts with ARHGAP18. Interacts with exosome cofactors EXOSC10 and MTREX. Post-translationally, phosphorylated in M (mitotic) phase.

Its subcellular location is the nucleus. It localises to the nucleolus. The protein localises to the cytoplasm. Its function is as follows. RNA-binding protein that associates with the RNA exosome complex. Involved in the 3'-processing of the 7S pre-RNA to the mature 5.8S rRNA and plays a role in recruiting the RNA exosome complex to pre-rRNA; this function may include C1D. This chain is M-phase phosphoprotein 6, found in Mus musculus (Mouse).